A 348-amino-acid chain; its full sequence is Peptide-N(4)-(N-acetyl-beta-glucosaminyl)asparagine amidase (348 aa).

4 residues coordinate Zn(2+): Cys116, Cys119, Cys151, and Cys154. Cys177 serves as the catalytic Nucleophile. Active-site residues include His204 and Asp221. A substrate-binding site is contributed by Glu224. Residues 311 to 348 (PSATPTKEMQKLKISKTGNKGRISGSAEWKESRGENGK) are disordered. Residues 338 to 348 (EWKESRGENGK) are compositionally biased toward basic and acidic residues.

The protein belongs to the transglutaminase-like superfamily. PNGase family. The cofactor is Zn(2+).

The protein resides in the cytoplasm. The enzyme catalyses Hydrolysis of an N(4)-(acetyl-beta-D-glucosaminyl)asparagine residue in which the glucosamine residue may be further glycosylated, to yield a (substituted) N-acetyl-beta-D-glucosaminylamine and a peptide containing an aspartate residue.. Its function is as follows. Specifically deglycosylates the denatured form of N-linked glycoproteins in the cytoplasm and assists their proteasome-mediated degradation. Cleaves the beta-aspartyl-glucosamine (GlcNAc) of the glycan and the amide side chain of Asn, converting Asn to Asp. Prefers proteins containing high-mannose over those bearing complex type oligosaccharides. Can recognize misfolded proteins in the endoplasmic reticulum that are exported to the cytosol to be destroyed and deglycosylate them, while it has no activity toward native proteins. Deglycosylation is a prerequisite for subsequent proteasome-mediated degradation of some, but not all, misfolded glycoproteins. This is Peptide-N(4)-(N-acetyl-beta-glucosaminyl)asparagine amidase (PNG1) from Candida glabrata (strain ATCC 2001 / BCRC 20586 / JCM 3761 / NBRC 0622 / NRRL Y-65 / CBS 138) (Yeast).